Consider the following 264-residue polypeptide: tRNA (guanine-N(7)-)-methyltransferase (264 aa).

The segment at 1 to 39 (MIHDDDPNAPGAPHDDATAAPASATRAAPAAGDDDDANP) is disordered. Over residues 18 to 31 (TAAPASATRAAPAA) the composition is skewed to low complexity. S-adenosyl-L-methionine is bound by residues glutamate 94, glutamate 119, aspartate 146, and aspartate 169. Aspartate 169 is a catalytic residue. Substrate is bound by residues lysine 173, aspartate 205, and 240–243 (TKFE).

Belongs to the class I-like SAM-binding methyltransferase superfamily. TrmB family.

The catalysed reaction is guanosine(46) in tRNA + S-adenosyl-L-methionine = N(7)-methylguanosine(46) in tRNA + S-adenosyl-L-homocysteine. The protein operates within tRNA modification; N(7)-methylguanine-tRNA biosynthesis. Functionally, catalyzes the formation of N(7)-methylguanine at position 46 (m7G46) in tRNA. The polypeptide is tRNA (guanine-N(7)-)-methyltransferase (Burkholderia mallei (strain ATCC 23344)).